Consider the following 173-residue polypeptide: Glutamyl-tRNA(Gln) amidotransferase subunit F, mitochondrial (173 aa).

The transit peptide at 1-15 (MSRFMIRAVFFRRYT) directs the protein to the mitochondrion.

This sequence belongs to the GatF family. Subunit of the heterotrimeric GatFAB amidotransferase (AdT) complex, composed of A, B and F subunits.

The protein resides in the mitochondrion inner membrane. It catalyses the reaction L-glutamyl-tRNA(Gln) + L-glutamine + ATP + H2O = L-glutaminyl-tRNA(Gln) + L-glutamate + ADP + phosphate + H(+). Its function is as follows. Allows the formation of correctly charged Gln-tRNA(Gln) through the transamidation of misacylated Glu-tRNA(Gln) in the mitochondria. The reaction takes place in the presence of glutamine and ATP through an activated gamma-phospho-Glu-tRNA(Gln). Required for proper protein synthesis within the mitochondrion. This chain is Glutamyl-tRNA(Gln) amidotransferase subunit F, mitochondrial, found in Candida glabrata (strain ATCC 2001 / BCRC 20586 / JCM 3761 / NBRC 0622 / NRRL Y-65 / CBS 138) (Yeast).